A 332-amino-acid polypeptide reads, in one-letter code: Phospho-N-acetylmuramoyl-pentapeptide-transferase (332 aa).

Transmembrane regions (helical) follow at residues Phe-3–Ile-23, Met-52–Phe-72, Leu-74–Phe-94, Leu-115–Gly-135, Val-140–Val-160, Ile-172–Phe-192, Phe-197–Asn-217, Ile-223–Ala-243, Trp-248–Val-268, and Val-311–Tyr-331.

The protein belongs to the glycosyltransferase 4 family. MraY subfamily. It depends on Mg(2+) as a cofactor.

Its subcellular location is the cell membrane. It catalyses the reaction UDP-N-acetyl-alpha-D-muramoyl-L-alanyl-gamma-D-glutamyl-L-lysyl-D-alanyl-D-alanine + di-trans,octa-cis-undecaprenyl phosphate = Mur2Ac(oyl-L-Ala-gamma-D-Glu-L-Lys-D-Ala-D-Ala)-di-trans,octa-cis-undecaprenyl diphosphate + UMP. Its pathway is cell wall biogenesis; peptidoglycan biosynthesis. Its function is as follows. Catalyzes the initial step of the lipid cycle reactions in the biosynthesis of the cell wall peptidoglycan: transfers peptidoglycan precursor phospho-MurNAc-pentapeptide from UDP-MurNAc-pentapeptide onto the lipid carrier undecaprenyl phosphate, yielding undecaprenyl-pyrophosphoryl-MurNAc-pentapeptide, known as lipid I. In Streptococcus suis (strain 98HAH33), this protein is Phospho-N-acetylmuramoyl-pentapeptide-transferase.